Consider the following 160-residue polypeptide: Endoribonuclease YbeY (160 aa).

The Zn(2+) site is built by histidine 121, histidine 125, and histidine 131.

This sequence belongs to the endoribonuclease YbeY family. Zn(2+) is required as a cofactor.

It is found in the cytoplasm. Functionally, single strand-specific metallo-endoribonuclease involved in late-stage 70S ribosome quality control and in maturation of the 3' terminus of the 16S rRNA. The sequence is that of Endoribonuclease YbeY from Syntrophus aciditrophicus (strain SB).